Here is a 215-residue protein sequence, read N- to C-terminus: uncharacterized protein (215 aa).

Catalysis depends on charge relay system residues Ser114, Asp162, and His194.

It belongs to the AB hydrolase superfamily. AB hydrolase 2 family.

This is an uncharacterized protein from Rickettsia felis (strain ATCC VR-1525 / URRWXCal2) (Rickettsia azadi).